A 194-amino-acid polypeptide reads, in one-letter code: Amidophosphoribosyltransferase (194 aa).

A propeptide spanning residues 1–11 is cleaved from the precursor; that stretch reads MPHEPKGLNEE. Cysteine 12 (nucleophile) is an active-site residue. One can recognise a Glutamine amidotransferase type-2 domain in the interval 12-194; the sequence is CGVFGVWGNP…PHGFRPMVVG (183 aa).

It in the C-terminal section; belongs to the purine/pyrimidine phosphoribosyltransferase family.

It catalyses the reaction 5-phospho-beta-D-ribosylamine + L-glutamate + diphosphate = 5-phospho-alpha-D-ribose 1-diphosphate + L-glutamine + H2O. The protein operates within purine metabolism; IMP biosynthesis via de novo pathway; N(1)-(5-phospho-D-ribosyl)glycinamide from 5-phospho-alpha-D-ribose 1-diphosphate: step 1/2. Its function is as follows. Catalyzes the formation of phosphoribosylamine from phosphoribosylpyrophosphate (PRPP) and glutamine. This chain is Amidophosphoribosyltransferase, found in Lacticaseibacillus casei (Lactobacillus casei).